The chain runs to 248 residues: 5'-nucleotidase SurE (248 aa).

The a divalent metal cation site is built by D8, D9, S39, and N91.

This sequence belongs to the SurE nucleotidase family. A divalent metal cation serves as cofactor.

It localises to the cytoplasm. It catalyses the reaction a ribonucleoside 5'-phosphate + H2O = a ribonucleoside + phosphate. Its function is as follows. Nucleotidase that shows phosphatase activity on nucleoside 5'-monophosphates. The sequence is that of 5'-nucleotidase SurE from Shewanella amazonensis (strain ATCC BAA-1098 / SB2B).